The sequence spans 389 residues: Succinate--CoA ligase [ADP-forming] subunit beta (389 aa).

The 236-residue stretch at 9-244 (KQLLAEYGIP…KTQEDETEVT (236 aa)) folds into the ATP-grasp domain. ATP-binding positions include Lys46, 53–55 (GRG), Gly102, and Glu107. Residues Asn199 and Asp213 each coordinate Mg(2+). Residues Asn264 and 321 to 323 (GIV) contribute to the substrate site.

Belongs to the succinate/malate CoA ligase beta subunit family. In terms of assembly, heterotetramer of two alpha and two beta subunits. The cofactor is Mg(2+).

It carries out the reaction succinate + ATP + CoA = succinyl-CoA + ADP + phosphate. The enzyme catalyses GTP + succinate + CoA = succinyl-CoA + GDP + phosphate. Its pathway is carbohydrate metabolism; tricarboxylic acid cycle; succinate from succinyl-CoA (ligase route): step 1/1. Its function is as follows. Succinyl-CoA synthetase functions in the citric acid cycle (TCA), coupling the hydrolysis of succinyl-CoA to the synthesis of either ATP or GTP and thus represents the only step of substrate-level phosphorylation in the TCA. The beta subunit provides nucleotide specificity of the enzyme and binds the substrate succinate, while the binding sites for coenzyme A and phosphate are found in the alpha subunit. The chain is Succinate--CoA ligase [ADP-forming] subunit beta from Xanthomonas campestris pv. campestris (strain 8004).